The sequence spans 988 residues: Transposase for transposon Tn21 (988 aa).

A disordered region spans residues 672–696 (GDGTTSSSDEQNFRTASKAKSTGHI). Residues 674 to 695 (GTTSSSDEQNFRTASKAKSTGH) show a composition bias toward polar residues.

Belongs to the transposase 7 family.

In terms of biological role, required for transposition of transposon Tn21. In Escherichia coli, this protein is Transposase for transposon Tn21 (tnpA).